The sequence spans 769 residues: Protein lethal(2)denticleless (769 aa).

6 WD repeats span residues 99-129 (CHFN…RLWE), 143-174 (GHTR…LIWD), 194-249 (GHTG…KVWD), 264-303 (RHKL…YCYN), 320-349 (NSTF…YIWN), and 362-393 (GHTV…KIWR). Positions 196–221 (TGGPGTPVSQRKQRTRTPKMAGGTTS) are disordered. A Phosphothreonine modification is found at threonine 201. Position 204 is a phosphoserine (serine 204). Disordered regions lie at residues 448–467 (RLMD…TTKR), 476–562 (AGQE…HVYT), and 655–769 (SPRL…VGSD). The residue at position 456 (threonine 456) is a Phosphothreonine. At serine 459 the chain carries Phosphoserine. The segment covering 503–518 (PSSQETACRHIQLQSI) has biased composition (polar residues). Serine 524 bears the Phosphoserine mark. A compositionally biased stretch (basic and acidic residues) spans 524–533 (SPSKRQKENS). Positions 546-562 (STPSHSPLSENVNHVYT) are enriched in polar residues. Position 655 is a phosphoserine (serine 655). Residues 657 to 666 (RLQSLRQSEC) are compositionally biased toward polar residues. Phosphoserine occurs at positions 679, 691, and 711. The span at 689–704 (AGSSSHSHSQSQPKTP) shows a compositional bias: low complexity. A compositionally biased stretch (polar residues) spans 705–714 (TSSRRNSETT). Positions 728–743 (PAEETTTTNAAPSSSD) are enriched in low complexity. Polar residues predominate over residues 758–769 (SMRTPTTAVGSD).

It belongs to the WD repeat cdt2 family. As to quaternary structure, component of the DCX(DTL) E3 ubiquitin ligase complex, at least composed of Cul-4, pic/DDB1, l(2)dtl/CDT2 and Roc1a. In terms of tissue distribution, ubiquitously expressed during embryogenesis with no sign of tissue specificity in expression up to stage 17.

The protein resides in the cytoplasm. The protein operates within protein modification; protein ubiquitination. In terms of biological role, substrate-specific adapter of a DCX (DDB1-CUL4-X-box) E3 ubiquitin-protein ligase complex required for cell cycle control. The DCX(DTL) complex, also named CRL4(CDT2) complex, mediates the polyubiquitination and subsequent degradation of E2f during S phase. E2f degradation is necessary to ensure proper development. Substrates require their interaction with PCNA for their polyubiquitination: substrates interact with PCNA via their PIP-box, leading to recruit the DCX(DTL) complex. This Drosophila melanogaster (Fruit fly) protein is Protein lethal(2)denticleless (l(2)dtl).